We begin with the raw amino-acid sequence, 72 residues long: UPF0154 protein EF_1734 (72 aa).

Residues 4 to 26 (GWVVLIAVIALLVGAAGGFFLAR) form a helical membrane-spanning segment.

Belongs to the UPF0154 family.

It localises to the membrane. The chain is UPF0154 protein EF_1734 from Enterococcus faecalis (strain ATCC 700802 / V583).